A 236-amino-acid chain; its full sequence is Ribosome maturation protein SDO1 homolog (236 aa).

The protein belongs to the SDO1/SBDS family.

The polypeptide is Ribosome maturation protein SDO1 homolog (Pyrococcus abyssi (strain GE5 / Orsay)).